The sequence spans 78 residues: LYR motif-containing protein 9 (78 aa).

The protein belongs to the complex I LYR family. LYRM9 subfamily.

The chain is LYR motif-containing protein 9 (Lyrm9) from Rattus norvegicus (Rat).